Here is a 354-residue protein sequence, read N- to C-terminus: Peptide chain release factor 1 (354 aa).

Residue Q232 is modified to N5-methylglutamine.

This sequence belongs to the prokaryotic/mitochondrial release factor family. Post-translationally, methylated by PrmC. Methylation increases the termination efficiency of RF1.

The protein resides in the cytoplasm. Functionally, peptide chain release factor 1 directs the termination of translation in response to the peptide chain termination codons UAG and UAA. This Phytoplasma australiense protein is Peptide chain release factor 1.